The chain runs to 397 residues: Acetyl-CoA acetyltransferase, cytosolic (397 aa).

Methionine 1 carries the post-translational modification N-acetylmethionine. The Acyl-thioester intermediate role is filled by cysteine 92. Lysine 200 is subject to N6-acetyllysine. 2 residues coordinate CoA: arginine 223 and serine 226. N6-acetyllysine is present on residues lysine 233 and lysine 235. CoA is bound at residue serine 252. Residue cysteine 383 is the Proton donor/acceptor of the active site.

This sequence belongs to the thiolase-like superfamily. Thiolase family. As to quaternary structure, homotetramer.

The protein localises to the cytoplasm. Its subcellular location is the cytosol. It carries out the reaction 2 acetyl-CoA = acetoacetyl-CoA + CoA. It participates in lipid metabolism; fatty acid metabolism. In terms of biological role, involved in the biosynthetic pathway of cholesterol. This chain is Acetyl-CoA acetyltransferase, cytosolic (Acat2), found in Mus musculus (Mouse).